The primary structure comprises 416 residues: Phosphoglycerate kinase (416 aa).

Substrate contacts are provided by residues 24–26 (DLN), arginine 40, 63–66 (HLGR), arginine 126, and arginine 166. Residues lysine 216, glycine 304, glutamate 335, and 364-367 (GGDS) contribute to the ATP site.

It belongs to the phosphoglycerate kinase family. Monomer.

It localises to the cytoplasm. The catalysed reaction is (2R)-3-phosphoglycerate + ATP = (2R)-3-phospho-glyceroyl phosphate + ADP. It functions in the pathway carbohydrate degradation; glycolysis; pyruvate from D-glyceraldehyde 3-phosphate: step 2/5. This Mycobacterium leprae (strain Br4923) protein is Phosphoglycerate kinase.